The chain runs to 276 residues: Large ribosomal subunit protein uL2 (276 aa).

Disordered regions lie at residues 38-59 (FQKS…GGHK) and 225-276 (VMNP…RHKR). A compositionally biased stretch (polar residues) spans 39–49 (QKSGRNNNGHI). The span at 50–59 (TTRHKGGGHK) shows a compositional bias: basic residues.

Belongs to the universal ribosomal protein uL2 family. Part of the 50S ribosomal subunit. Forms a bridge to the 30S subunit in the 70S ribosome.

In terms of biological role, one of the primary rRNA binding proteins. Required for association of the 30S and 50S subunits to form the 70S ribosome, for tRNA binding and peptide bond formation. It has been suggested to have peptidyltransferase activity; this is somewhat controversial. Makes several contacts with the 16S rRNA in the 70S ribosome. The polypeptide is Large ribosomal subunit protein uL2 (Cupriavidus necator (strain ATCC 17699 / DSM 428 / KCTC 22496 / NCIMB 10442 / H16 / Stanier 337) (Ralstonia eutropha)).